Reading from the N-terminus, the 776-residue chain is Glutathione biosynthesis bifunctional protein GshAB (776 aa).

The segment at methionine 1–isoleucine 354 is glutamate--cysteine ligase. Residues lysine 521–phenylalanine 775 form the ATP-grasp domain. Serine 548–arginine 606 contacts ATP. Residues aspartate 728, glutamate 745, and asparagine 747 each coordinate Mg(2+). 3 residues coordinate Mn(2+): aspartate 728, glutamate 745, and asparagine 747.

The protein in the N-terminal section; belongs to the glutamate--cysteine ligase type 1 family. Type 2 subfamily. In terms of assembly, monomer. Mg(2+) is required as a cofactor. It depends on Mn(2+) as a cofactor.

It carries out the reaction L-cysteine + L-glutamate + ATP = gamma-L-glutamyl-L-cysteine + ADP + phosphate + H(+). It catalyses the reaction gamma-L-glutamyl-L-cysteine + glycine + ATP = glutathione + ADP + phosphate + H(+). It functions in the pathway sulfur metabolism; glutathione biosynthesis; glutathione from L-cysteine and L-glutamate: step 1/2. The protein operates within sulfur metabolism; glutathione biosynthesis; glutathione from L-cysteine and L-glutamate: step 2/2. Its function is as follows. Synthesizes glutathione from L-glutamate and L-cysteine via gamma-L-glutamyl-L-cysteine. The polypeptide is Glutathione biosynthesis bifunctional protein GshAB (Listeria welshimeri serovar 6b (strain ATCC 35897 / DSM 20650 / CCUG 15529 / CIP 8149 / NCTC 11857 / SLCC 5334 / V8)).